A 357-amino-acid chain; its full sequence is UPF0283 membrane protein BAbS19_I09770 (357 aa).

Positions 1–36 (MSDKTPRKPTAFRLEQPARVSAASEQEEPRRPRAVK) are disordered. A compositionally biased stretch (basic and acidic residues) spans 27–36 (EEPRRPRAVK). 2 helical membrane-spanning segments follow: residues 78-98 (ILFGALGILVSFAIGIWTEDL) and 109-129 (LGWTALGVAMVALAAFAAIIL).

It belongs to the UPF0283 family.

It is found in the cell inner membrane. This Brucella abortus (strain S19) protein is UPF0283 membrane protein BAbS19_I09770.